A 37-amino-acid polypeptide reads, in one-letter code: Diuretic hormone 1 (37 aa).

The protein belongs to the sauvagine/corticotropin-releasing factor/urotensin I family.

Its subcellular location is the secreted. Its function is as follows. Stimulates fluid secretion by the Malpighian tubules. Increases cyclic AMP production. The polypeptide is Diuretic hormone 1 (Tenebrio molitor (Yellow mealworm beetle)).